A 348-amino-acid chain; its full sequence is tRNA N6-adenosine threonylcarbamoyltransferase (348 aa).

Positions 119 and 123 each coordinate Fe cation. Substrate contacts are provided by residues 141–145 (LVSGG), Asp-174, Gly-187, Asp-191, and Asn-280. Asp-310 serves as a coordination point for Fe cation.

Belongs to the KAE1 / TsaD family. The cofactor is Fe(2+).

Its subcellular location is the cytoplasm. It catalyses the reaction L-threonylcarbamoyladenylate + adenosine(37) in tRNA = N(6)-L-threonylcarbamoyladenosine(37) in tRNA + AMP + H(+). Required for the formation of a threonylcarbamoyl group on adenosine at position 37 (t(6)A37) in tRNAs that read codons beginning with adenine. Is involved in the transfer of the threonylcarbamoyl moiety of threonylcarbamoyl-AMP (TC-AMP) to the N6 group of A37, together with TsaE and TsaB. TsaD likely plays a direct catalytic role in this reaction. The protein is tRNA N6-adenosine threonylcarbamoyltransferase of Enterococcus faecalis (strain ATCC 700802 / V583).